We begin with the raw amino-acid sequence, 459 residues long: tRNA modification GTPase MnmE (459 aa).

(6S)-5-formyl-5,6,7,8-tetrahydrofolate contacts are provided by R22, E85, and R124. The TrmE-type G domain occupies 221–380; it reads GLSTVIVGKP…LEIQIRDLFF (160 aa). N231 contributes to the K(+) binding site. GTP-binding positions include 231-236, 250-256, and 275-278; these read NVGKSS, TEVAGTT, and DTAG. S235 provides a ligand contact to Mg(2+). Residues T250, V252, and T255 each coordinate K(+). Position 256 (T256) interacts with Mg(2+). A (6S)-5-formyl-5,6,7,8-tetrahydrofolate-binding site is contributed by K459.

Belongs to the TRAFAC class TrmE-Era-EngA-EngB-Septin-like GTPase superfamily. TrmE GTPase family. As to quaternary structure, homodimer. Heterotetramer of two MnmE and two MnmG subunits. K(+) is required as a cofactor.

It localises to the cytoplasm. Functionally, exhibits a very high intrinsic GTPase hydrolysis rate. Involved in the addition of a carboxymethylaminomethyl (cmnm) group at the wobble position (U34) of certain tRNAs, forming tRNA-cmnm(5)s(2)U34. The sequence is that of tRNA modification GTPase MnmE from Staphylococcus aureus (strain USA300 / TCH1516).